The following is a 570-amino-acid chain: Periplasmic trehalase (570 aa).

A signal peptide spans Met-1–Ala-34. Residues Arg-159, Trp-166 to Asp-167, Asn-203, Arg-212 to Gln-214, Arg-284 to Glu-286, and Gly-317 each bind substrate. Active-site proton donor/acceptor residues include Asp-319 and Glu-503. Residue Glu-518 coordinates substrate. The disordered stretch occupies residues Pro-545–Gln-570. Over residues Pro-554–Gln-570 the composition is skewed to low complexity.

It belongs to the glycosyl hydrolase 37 family. As to quaternary structure, monomer.

Its subcellular location is the periplasm. The enzyme catalyses alpha,alpha-trehalose + H2O = alpha-D-glucose + beta-D-glucose. Functionally, provides the cells with the ability to utilize trehalose at high osmolarity by splitting it into glucose molecules that can subsequently be taken up by the phosphotransferase-mediated uptake system. This Salmonella agona (strain SL483) protein is Periplasmic trehalase.